Reading from the N-terminus, the 561-residue chain is Oxygen-dependent choline dehydrogenase (561 aa).

Position 7–36 (7–36 (DYIIVGAGSAGNVLASRLTEDADVTVLLLE)) interacts with FAD. The Proton acceptor role is filled by H474.

The protein belongs to the GMC oxidoreductase family. Requires FAD as cofactor.

It carries out the reaction choline + A = betaine aldehyde + AH2. It catalyses the reaction betaine aldehyde + NAD(+) + H2O = glycine betaine + NADH + 2 H(+). Its pathway is amine and polyamine biosynthesis; betaine biosynthesis via choline pathway; betaine aldehyde from choline (cytochrome c reductase route): step 1/1. In terms of biological role, involved in the biosynthesis of the osmoprotectant glycine betaine. Catalyzes the oxidation of choline to betaine aldehyde and betaine aldehyde to glycine betaine at the same rate. The chain is Oxygen-dependent choline dehydrogenase from Paraburkholderia phytofirmans (strain DSM 17436 / LMG 22146 / PsJN) (Burkholderia phytofirmans).